Reading from the N-terminus, the 571-residue chain is Proline--tRNA ligase (571 aa).

It belongs to the class-II aminoacyl-tRNA synthetase family. ProS type 1 subfamily. Homodimer.

The protein localises to the cytoplasm. It catalyses the reaction tRNA(Pro) + L-proline + ATP = L-prolyl-tRNA(Pro) + AMP + diphosphate. In terms of biological role, catalyzes the attachment of proline to tRNA(Pro) in a two-step reaction: proline is first activated by ATP to form Pro-AMP and then transferred to the acceptor end of tRNA(Pro). As ProRS can inadvertently accommodate and process non-cognate amino acids such as alanine and cysteine, to avoid such errors it has two additional distinct editing activities against alanine. One activity is designated as 'pretransfer' editing and involves the tRNA(Pro)-independent hydrolysis of activated Ala-AMP. The other activity is designated 'posttransfer' editing and involves deacylation of mischarged Ala-tRNA(Pro). The misacylated Cys-tRNA(Pro) is not edited by ProRS. The polypeptide is Proline--tRNA ligase (Shewanella baltica (strain OS195)).